The primary structure comprises 276 residues: Cerberus (276 aa).

Positions 1 to 20 are cleaved as a signal peptide; that stretch reads MLLCVLKIYIIFCLVNDGAG. N-linked (GlcNAc...) asparagine glycosylation is found at N103, N118, and N160. 4 cysteine pairs are disulfide-bonded: C175/C221, C189/C235, C199/C251, and C203/C253. Residues 175–259 enclose the CTCK domain; sequence CKTLPFTQNI…ECACEAHKNN (85 aa). N234 is a glycosylation site (N-linked (GlcNAc...) asparagine).

This sequence belongs to the DAN family. The long chain interacts with nodal/nr-1, bmp4 and wnt8, thereby inhibiting their function. The short chain interacts with nodal/nr-1 but not bmp4 or wnt8. Expressed in the anterior endomesoderm of the early gastrula with expression expanded laterally around the margin at the endoderm/mesoderm boundary.

It is found in the secreted. Its function is as follows. Inhibits wnt, nodal/nr-1 and bmp signaling in the embryo to promote head formation and anterior neural induction. Within the endoderm, acts as an essential mediator of nodal/nr-1-induced cardiogenesis in the overlying mesoderm. The protein is Cerberus of Xenopus tropicalis (Western clawed frog).